A 102-amino-acid polypeptide reads, in one-letter code: Small ribosomal subunit protein uS10 (102 aa).

This sequence belongs to the universal ribosomal protein uS10 family. As to quaternary structure, part of the 30S ribosomal subunit.

Functionally, involved in the binding of tRNA to the ribosomes. The chain is Small ribosomal subunit protein uS10 from Roseiflexus castenholzii (strain DSM 13941 / HLO8).